Reading from the N-terminus, the 640-residue chain is Translation factor GUF1, mitochondrial (640 aa).

Residues 1-26 (MRRLRSLYLQSSICFRRFNHYSAKDT) constitute a mitochondrion transit peptide. The region spanning 39-223 (ENYRNFSIVA…AIIDRIPPPT (185 aa)) is the tr-type G domain. GTP contacts are provided by residues 48-55 (AHVDHGKS), 115-119 (DTPGH), and 169-172 (NKID).

The protein belongs to the TRAFAC class translation factor GTPase superfamily. Classic translation factor GTPase family. LepA subfamily.

Its subcellular location is the mitochondrion inner membrane. It catalyses the reaction GTP + H2O = GDP + phosphate + H(+). Functionally, promotes mitochondrial protein synthesis. May act as a fidelity factor of the translation reaction, by catalyzing a one-codon backward translocation of tRNAs on improperly translocated ribosomes. Binds to mitochondrial ribosomes in a GTP-dependent manner. The polypeptide is Translation factor GUF1, mitochondrial (Lachancea thermotolerans (strain ATCC 56472 / CBS 6340 / NRRL Y-8284) (Yeast)).